Reading from the N-terminus, the 491-residue chain is MQVIETLAQGLKRELKVVIPADEMEARMNERLVEVKDRVRINGFRPGKVPVAHLKKVYGKSIMADLVNEIVREKPTEILTSRGEKSATQPEIGMTEDEAEADKILKAEADFEFTVAYEIIPPIELKDASGIKVTREVVDVGEDEVNEQIERIAESARTYESKKGKAANGDRVTIDYLGKVDGEAFDGGKDEDAELVLGSNRFIPGFEEQLVGAKAGDEKTITVTFPADYPAANLAGKEATFDVTVKDVAAAAPIEINDELATKLGLESVDKLKEIVRGQIESQFGSITRQKVKRQLLDQLDELYQFDTPERLVDAEFENIWRQINTDLQQAGKTFADEDTTEEEARAEYRKLAQRRVRLGLVLSEIGEKAGVQVSDDEMQNSLFQQLRQFPGQEKEIIEYFRNTPGAAASLRAPLFEEKVVDHLLTEVSVTDKKVSKEELTAEDDADEKPAKKTASKKKAAAKADAAEGEEAAAPKRKAPAKKKASDESAE.

The PPIase FKBP-type domain maps to 169–254 (GDRVTIDYLG…VKDVAAAAPI (86 aa)). Residues 434–491 (KVSKEELTAEDDADEKPAKKTASKKKAAAKADAAEGEEAAAPKRKAPAKKKASDESAE) form a disordered region. Basic residues predominate over residues 452–461 (KKTASKKKAA).

The protein belongs to the FKBP-type PPIase family. Tig subfamily.

The protein localises to the cytoplasm. The enzyme catalyses [protein]-peptidylproline (omega=180) = [protein]-peptidylproline (omega=0). In terms of biological role, involved in protein export. Acts as a chaperone by maintaining the newly synthesized protein in an open conformation. Functions as a peptidyl-prolyl cis-trans isomerase. The protein is Trigger factor of Sinorhizobium medicae (strain WSM419) (Ensifer medicae).